A 253-amino-acid chain; its full sequence is Trypsin delta (253 aa).

An N-terminal signal peptide occupies residues 1-22 (MLKFVILLSAVACALGGTIPEG). A propeptide spans 23 to 30 (LLPQLDGR) (activation peptide). In terms of domain architecture, Peptidase S1 spans 31–253 (IVGGTATTIS…DLRAWVVRNA (223 aa)). The cysteines at positions 56 and 72 are disulfide-linked. Residues His71 and Asp116 each act as charge relay system in the active site. 2 cysteine pairs are disulfide-bonded: Cys180-Cys197 and Cys206-Cys230. Ser210 (charge relay system) is an active-site residue.

The protein belongs to the peptidase S1 family.

It is found in the secreted. The protein resides in the extracellular space. It carries out the reaction Preferential cleavage: Arg-|-Xaa, Lys-|-Xaa.. This is Trypsin delta from Drosophila erecta (Fruit fly).